The sequence spans 443 residues: Regulator of rDNA transcription protein 5 (443 aa).

The region spanning 4 to 87 is the RRM 1 domain; it reads SRIYIANVSY…RVLRVRTHNP (84 aa). The tract at residues 112-140 is disordered; sequence EDTAASGERAPTDAQDHPDQPQEGHMSPD. The segment covering 121–133 has biased composition (basic and acidic residues); the sequence is APTDAQDHPDQPQ. Residues 183–268 form the RRM 2 domain; it reads DTVYCAFLPK…TKISIKPAYI (86 aa). Residues 408–443 form a disordered region; that stretch reads GMTKQSVGSNKKKNKKKKSARGKEVRKLSVSNTTTQ. The span at 417 to 427 shows a compositional bias: basic residues; it reads NKKKNKKKKSA.

Belongs to the RRT5 family.

In terms of biological role, may be involved in the modulation of rDNA transcription. The polypeptide is Regulator of rDNA transcription protein 5 (RRT5) (Candida glabrata (strain ATCC 2001 / BCRC 20586 / JCM 3761 / NBRC 0622 / NRRL Y-65 / CBS 138) (Yeast)).